We begin with the raw amino-acid sequence, 206 residues long: Small ribosomal subunit protein uS4 (206 aa).

One can recognise an S4 RNA-binding domain in the interval 96 to 156; the sequence is GRLDNVVYRM…EKAKKQSRVK (61 aa).

It belongs to the universal ribosomal protein uS4 family. As to quaternary structure, part of the 30S ribosomal subunit. Contacts protein S5. The interaction surface between S4 and S5 is involved in control of translational fidelity.

One of the primary rRNA binding proteins, it binds directly to 16S rRNA where it nucleates assembly of the body of the 30S subunit. Functionally, with S5 and S12 plays an important role in translational accuracy. The sequence is that of Small ribosomal subunit protein uS4 from Shigella flexneri.